The primary structure comprises 220 residues: uncharacterized protein (220 aa).

A run of 4 helical transmembrane segments spans residues 61–81 (LISV…SFFG), 85–105 (SVMF…YGAF), 115–135 (FVII…ILLL), and 150–170 (LPLE…SLLL).

It is found in the membrane. This is an uncharacterized protein from Caenorhabditis elegans.